The following is a 424-amino-acid chain: MAKFIDQVKIMLKAGKGGDGMISFRREAHVDKGGPDGGDGGTGGNIYFVADLGKNTLLSFYKNKFIIAEDGVKGGPKNLYGAKGKDTIVKVPLGTLVYKNKKIVADVIKENHLYLVAKGGKGGRGNNKFKTSKNTAPRIAENGMPGEKYEANIVLKILSDVGLVGLPSCGKSTLINALSNAKAKVAEYEFTTLVPQLGLVKYYDYSYTIADLPGLIKGASLGKGLGIQFLRHIERCKVVIHIVDFGSLDKDPIQSYEAIQKELESYKLNLTQKPQLVVANKSDLANFKNNIEKFKAKYPNIEIIEISALNYHNVENLKKIIWEFLEKTSHLQIKIEDDFETEVKEINYEPDFVIQKMNQNHFKVTGKKIEELVLKIPINTFDNLMRFNNILKKIGVWEALIKRDIQKGDLVEIYQHKFEWEEEL.

The Obg domain occupies 2–158 (AKFIDQVKIM…YEANIVLKIL (157 aa)). One can recognise an OBG-type G domain in the interval 159 to 326 (SDVGLVGLPS…LKKIIWEFLE (168 aa)). GTP-binding positions include 165–172 (GLPSCGKS), 190–194 (FTTLV), 211–214 (DLPG), 280–283 (NKSD), and 307–309 (SAL). 2 residues coordinate Mg(2+): S172 and T192. An OCT domain is found at 344–422 (KEINYEPDFV…IYQHKFEWEE (79 aa)).

The protein belongs to the TRAFAC class OBG-HflX-like GTPase superfamily. OBG GTPase family. Monomer. Requires Mg(2+) as cofactor.

Its subcellular location is the cytoplasm. In terms of biological role, an essential GTPase which binds GTP, GDP and possibly (p)ppGpp with moderate affinity, with high nucleotide exchange rates and a fairly low GTP hydrolysis rate. Plays a role in control of the cell cycle, stress response, ribosome biogenesis and in those bacteria that undergo differentiation, in morphogenesis control. The protein is GTPase Obg of Mycoplasmopsis synoviae (strain 53) (Mycoplasma synoviae).